We begin with the raw amino-acid sequence, 263 residues long: tRNA1(Val) (adenine(37)-N6)-methyltransferase (263 aa).

Belongs to the methyltransferase superfamily. tRNA (adenine-N(6)-)-methyltransferase family.

The protein resides in the cytoplasm. It catalyses the reaction adenosine(37) in tRNA1(Val) + S-adenosyl-L-methionine = N(6)-methyladenosine(37) in tRNA1(Val) + S-adenosyl-L-homocysteine + H(+). Functionally, specifically methylates the adenine in position 37 of tRNA(1)(Val) (anticodon cmo5UAC). In Salmonella choleraesuis (strain SC-B67), this protein is tRNA1(Val) (adenine(37)-N6)-methyltransferase.